We begin with the raw amino-acid sequence, 190 residues long: dCTP deaminase (190 aa).

113 to 118 (KSTYAR) serves as a coordination point for dCTP. The active-site Proton donor/acceptor is Glu-139. Positions 158, 172, 181, and 182 each coordinate dCTP.

The protein belongs to the dCTP deaminase family. In terms of assembly, homotrimer.

The enzyme catalyses dCTP + H2O + H(+) = dUTP + NH4(+). Its pathway is pyrimidine metabolism; dUMP biosynthesis; dUMP from dCTP (dUTP route): step 1/2. Functionally, catalyzes the deamination of dCTP to dUTP. The polypeptide is dCTP deaminase (Chlamydia muridarum (strain MoPn / Nigg)).